The sequence spans 292 residues: Homoserine kinase (292 aa).

84–94 (PLARGMGSSSA) is an ATP binding site.

It belongs to the GHMP kinase family. Homoserine kinase subfamily.

It is found in the cytoplasm. The enzyme catalyses L-homoserine + ATP = O-phospho-L-homoserine + ADP + H(+). Its pathway is amino-acid biosynthesis; L-threonine biosynthesis; L-threonine from L-aspartate: step 4/5. Catalyzes the ATP-dependent phosphorylation of L-homoserine to L-homoserine phosphate. The chain is Homoserine kinase from Thermus thermophilus (strain ATCC BAA-163 / DSM 7039 / HB27).